The following is a 303-amino-acid chain: Coenzyme PQQ synthesis protein B (303 aa).

It belongs to the PqqB family.

It functions in the pathway cofactor biosynthesis; pyrroloquinoline quinone biosynthesis. Its function is as follows. May be involved in the transport of PQQ or its precursor to the periplasm. This chain is Coenzyme PQQ synthesis protein B, found in Acinetobacter baumannii (strain AYE).